Here is an 84-residue protein sequence, read N- to C-terminus: Large ribosomal subunit protein bL31B (84 aa).

The protein belongs to the bacterial ribosomal protein bL31 family. Type B subfamily. In terms of assembly, part of the 50S ribosomal subunit.

The chain is Large ribosomal subunit protein bL31B from Rhodococcus opacus (strain B4).